Reading from the N-terminus, the 618-residue chain is ADP,ATP carrier protein 2, chloroplastic (618 aa).

The N-terminal 76 residues, 1 to 76, are a transit peptide targeting the chloroplast; sequence MEGLIQTRGI…KERSRGFICK (76 aa). The residue at position 77 (alanine 77) is an N-acetylalanine. The next 11 helical transmembrane spans lie at 110–130, 148–168, 179–199, 237–257, 270–289, 312–332, 368–388, 401–421, 441–461, 464–484, and 542–562; these read LKKI…YTIL, IIPF…MLLY, ALFY…GFVM, LFYV…FWGF, FYPL…GRTV, AMMS…WWVN, LATL…TWKS, SAFM…MMLL, VLLL…PFAP, AKLG…QNIF, and LANS…AWLA. The interval 586–618 is disordered; sequence RASSVKIPVVSQEDAPSGETTSQLSEKSTPTGI. Positions 603 to 618 are enriched in polar residues; sequence GETTSQLSEKSTPTGI.

The protein belongs to the ADP/ATP translocase tlc (TC 2.A.12.2) family.

Its subcellular location is the plastid. The protein localises to the chloroplast membrane. The sequence is that of ADP,ATP carrier protein 2, chloroplastic (AATP2) from Arabidopsis thaliana (Mouse-ear cress).